Consider the following 103-residue polypeptide: uncharacterized protein (103 aa).

Residues 38–51 (TTTTSSTTSASTTS) are compositionally biased toward low complexity. Residues 38 to 70 (TTTTSSTTSASTTSQPSFSLPTSCNSNSPQSNL) form a disordered region. A compositionally biased stretch (polar residues) spans 52–70 (QPSFSLPTSCNSNSPQSNL).

This is an uncharacterized protein from Dictyostelium discoideum (Social amoeba).